A 135-amino-acid chain; its full sequence is MAQTQADTAARKPVGQSVSATRRVSRLRRHARLRKRIAGTQQRPRLVVHRSARHIHVQLVNDANGTTVAAASSIETDVRGLDGDKKARSVRVGQLIAERAKAAGIDTVVFDRGGYTYGGRIAALADAARENGLKF.

The segment at 1–23 (MAQTQADTAARKPVGQSVSATRR) is disordered.

This sequence belongs to the universal ribosomal protein uL18 family. As to quaternary structure, part of the 50S ribosomal subunit; part of the 5S rRNA/L5/L18/L25 subcomplex. Contacts the 5S and 23S rRNAs.

Its function is as follows. This is one of the proteins that bind and probably mediate the attachment of the 5S RNA into the large ribosomal subunit, where it forms part of the central protuberance. This is Large ribosomal subunit protein uL18 from Mycobacterium marinum (strain ATCC BAA-535 / M).